A 349-amino-acid chain; its full sequence is Tribbles homolog 3 (349 aa).

An interaction with DDIT3/CHOP region spans residues 1-122 (MRATSLAASA…QHVARPTEVL (122 aa)). The interval 35–57 (VRDEPEPGPTPSLPPASDLSPAV) is disordered. Residues 63–310 (LGPYILLERE…ALGILLHPWL (248 aa)) form the Protein kinase domain. Positions 317-349 (VSPPRSDRREMDQVVPDGPQLEEAEEGEVGLYG) are disordered. Acidic residues predominate over residues 336–349 (QLEEAEEGEVGLYG).

Belongs to the protein kinase superfamily. CAMK Ser/Thr protein kinase family. Tribbles subfamily. In terms of assembly, interacts with AKT1, AKT2, MAP2K1 and MAP2K7. Interacts with ATF4. Interacts with DDIT3/CHOP and inhibits its interaction with EP300/P300. Interacts with APOBEC3C. Interacts (via N-terminus) with APOBEC3A. Interacts with RELA. Detected only in the lung. Not detected in the heart, brain, spleen, liver, skeletal muscle, kidney and testis.

It is found in the nucleus. Inactive protein kinase which acts as a regulator of the integrated stress response (ISR), a process for adaptation to various stress. Inhibits the transcriptional activity of DDIT3/CHOP and is involved in DDIT3/CHOP-dependent cell death during ER stress. May play a role in programmed neuronal cell death but does not appear to affect non-neuronal cells. Acts as a negative feedback regulator of the ATF4-dependent transcription during the ISR: while TRIB3 expression is promoted by ATF4, TRIB3 protein interacts with ATF4 and inhibits ATF4 transcription activity. Disrupts insulin signaling by binding directly to Akt kinases and blocking their activation. May bind directly to and mask the 'Thr-308' phosphorylation site in AKT1. Interacts with the NF-kappa-B transactivator p65 RELA and inhibits its phosphorylation and thus its transcriptional activation activity. Interacts with MAPK kinases and regulates activation of MAP kinases. Can inhibit APOBEC3A editing of nuclear DNA. In Rattus norvegicus (Rat), this protein is Tribbles homolog 3 (Trib3).